The chain runs to 65 residues: Photosystem II reaction center protein J (65 aa).

A helical membrane pass occupies residues 35-55 (LWLVATAGGTAVIFVLGIFFY).

This sequence belongs to the PsbJ family. In terms of assembly, PSII is composed of 1 copy each of membrane proteins PsbA, PsbB, PsbC, PsbD, PsbE, PsbF, PsbH, PsbI, PsbJ, PsbK, PsbL, PsbM, PsbT, PsbX, PsbY, Psb30/Ycf12, peripheral proteins PsbO, CyanoQ (PsbQ), PsbU, PsbV and a large number of cofactors. It forms dimeric complexes.

It localises to the cellular thylakoid membrane. In terms of biological role, one of the components of the core complex of photosystem II (PSII). PSII is a light-driven water:plastoquinone oxidoreductase that uses light energy to abstract electrons from H(2)O, generating O(2) and a proton gradient subsequently used for ATP formation. It consists of a core antenna complex that captures photons, and an electron transfer chain that converts photonic excitation into a charge separation. The protein is Photosystem II reaction center protein J of Prochlorococcus marinus (strain NATL2A).